Here is a 646-residue protein sequence, read N- to C-terminus: Vitamin K-dependent protein S (646 aa).

The propeptide occupies 1-12 (GHASQVLVRKRR). Positions 13-58 (ANSMLEETKKGNLERECIEELCNKEEAREVFENDPETDYFYPKYLG) constitute a Gla domain. Residues Glu18, Glu19, Glu26, Glu28, Glu31, Glu32, Glu37, Glu38, Glu41, Glu44, and Glu48 each carry the 4-carboxyglutamate modification. Cys29 and Cys34 are oxidised to a cystine. Positions 59-87 (CLGSFRAKLFTATRRSANGYPDLRSCVNA) are thrombin-sensitive. The region spanning 88-126 (IPDQCNPLPCSEEGYLNCKDGQATFTCICKPGWQGEKCE) is the EGF-like 1 domain. 13 disulfides stabilise this stretch: Cys92–Cys105, Cys97–Cys114, Cys116–Cys125, Cys132–Cys146, Cys142–Cys155, Cys157–Cys170, Cys176–Cys188, Cys183–Cys197, Cys199–Cys212, Cys218–Cys227, Cys223–Cys236, Cys238–Cys253, and Cys420–Cys446. Asp107 carries the (3R)-3-hydroxyaspartate modification. An EGF-like 2; calcium-binding domain is found at 128 to 171 (DINECKDPTNINGGCSQICDNTAGSYHCSCKSGFVMLANEKDCK). Residues 172-213 (DMDECSVKPSVCGTAVCKNTPGDFECECSEGYRYNPTAKSCE) enclose the EGF-like 3; calcium-binding domain. The 41-residue stretch at 214 to 254 (DIDECSENMCAQLCVNYPGGYSCYCDGKKGFKLAQDKKSCE) folds into the EGF-like 4; calcium-binding domain. Laminin G-like domains lie at 270 to 446 (LLYL…KKHC) and 455 to 636 (YYPG…AHSC). Asn470 and Asn480 each carry an N-linked (GlcNAc...) asparagine glycan. Cys609 and Cys636 are oxidised to a cystine.

As to quaternary structure, interacts with C4b-binding protein, a regulator of the complex system. In rabbit plasma however, protein S appears to be present only in free form. In terms of processing, the iron and 2-oxoglutarate dependent 3-hydroxylation of aspartate and asparagine is (R) stereospecific within EGF domains. Plasma.

The protein localises to the secreted. Its function is as follows. Anticoagulant plasma protein; it is a cofactor to activated protein C in the degradation of coagulation factors Va and VIIIa. It helps to prevent coagulation and stimulating fibrinolysis. This Oryctolagus cuniculus (Rabbit) protein is Vitamin K-dependent protein S (PROS1).